Here is a 335-residue protein sequence, read N- to C-terminus: tRNA methyltransferase 10 homolog A (335 aa).

Disordered regions lie at residues 1-91 and 279-335; these read MSSE…DRKR and VPAH…PDPQ. A phosphoserine mark is found at Ser22 and Ser24. Over residues 52 to 62 the composition is skewed to basic and acidic residues; sequence RLWEEQREQRK. Residues 52 to 84 are a coiled coil; sequence RLWEEQREQRKEKRKEKRKRKKLERRCQLESNS. Residues 63–75 are compositionally biased toward basic residues; sequence EKRKEKRKRKKLE. In terms of domain architecture, SAM-dependent MTase TRM10-type spans 88–279; it reads DRKRIRRHVA…TILPPRKGAV (192 aa). Over residues 304-319 the composition is skewed to basic and acidic residues; that stretch reads EGEHGRDDPGSPHKEQ. Positions 320-335 are enriched in low complexity; sequence QGQQSSSVSAVSPDPQ. Ser331 carries the post-translational modification Phosphoserine.

Belongs to the class IV-like SAM-binding methyltransferase superfamily. TRM10 family. Interacts with tRNA. In terms of tissue distribution, ubiquitously expressed. Is more abundant in brain and pancreatic islets compared to other tissues (at protein level).

The protein localises to the nucleus. Its subcellular location is the nucleolus. It catalyses the reaction guanosine(9) in tRNA + S-adenosyl-L-methionine = N(1)-methylguanosine(9) in tRNA + S-adenosyl-L-homocysteine + H(+). S-adenosyl-L-methionine-dependent guanine N(1)-methyltransferase that catalyzes the formation of N(1)-methylguanine at position 9 (m1G9) in tRNAs. Probably not able to catalyze formation of N(1)-methyladenine at position 9 (m1A9) in tRNAs. The polypeptide is tRNA methyltransferase 10 homolog A (Trmt10a) (Rattus norvegicus (Rat)).